A 415-amino-acid polypeptide reads, in one-letter code: Esterase FrsA (415 aa).

A disordered region spans residues 1–23 (MANRNLSESLFKPRQKHQETSTL).

This sequence belongs to the FrsA family.

The enzyme catalyses a carboxylic ester + H2O = an alcohol + a carboxylate + H(+). Catalyzes the hydrolysis of esters. The protein is Esterase FrsA of Photorhabdus laumondii subsp. laumondii (strain DSM 15139 / CIP 105565 / TT01) (Photorhabdus luminescens subsp. laumondii).